The primary structure comprises 289 residues: Serine/threonine-protein phosphatase Pgam5, mitochondrial (289 aa).

A helical membrane pass occupies residues 7–23 (FACGTGAGLAAYYLQRL).

It belongs to the phosphoglycerate mutase family. BPG-dependent PGAM subfamily. As to quaternary structure, interacts with Pk92B/ASK1.

The protein resides in the mitochondrion outer membrane. It catalyses the reaction O-phospho-L-seryl-[protein] + H2O = L-seryl-[protein] + phosphate. The enzyme catalyses O-phospho-L-threonyl-[protein] + H2O = L-threonyl-[protein] + phosphate. Functionally, displays phosphatase activity for serine/threonine residues, and dephosphorylates and activates Pk92B kinase. Has apparently no phosphoglycerate mutase activity. The polypeptide is Serine/threonine-protein phosphatase Pgam5, mitochondrial (Drosophila simulans (Fruit fly)).